A 396-amino-acid chain; its full sequence is Protein NDRG1-B (396 aa).

A disordered region spans residues 326–396 (RSRTGSAASS…NTPKSMEVSC (71 aa)). Residues 327 to 340 (SRTGSAASSSSQDG) show a composition bias toward low complexity. 4 tandem repeats follow at residues 340 to 349 (GNRSRSHTNE), 350 to 359 (GSRSRSQTGD), 360 to 369 (GNRSRAHTGD), and 370 to 379 (GNRSRSHTDT). Positions 340–379 (GNRSRSHTNEGSRSRSQTGDGNRSRAHTGDGNRSRSHTDT) are 4 X 10 AA tandem repeats of G-[NS]-R-S-R-[AS]-[HQ]-T-[DGN]-[DET]. Basic and acidic residues predominate over residues 366–377 (HTGDGNRSRSHT). Residues 378-390 (DTNNVNSDHNTPK) are compositionally biased toward polar residues.

Belongs to the NDRG family.

In terms of biological role, may be involved in pronephros development, after specification of the pronephros. This is Protein NDRG1-B (ndrg1-b) from Xenopus laevis (African clawed frog).